The sequence spans 338 residues: Holliday junction branch migration complex subunit RuvB (338 aa).

The tract at residues 1 to 180 is large ATPase domain (RuvB-L); sequence MERLLDNKFS…FGIIERLDYY (180 aa). ATP is bound by residues leucine 19, arginine 20, glycine 61, lysine 64, threonine 65, threonine 66, arginine 170, tyrosine 180, and arginine 217. Residue threonine 65 participates in Mg(2+) binding. The small ATPAse domain (RuvB-S) stretch occupies residues 181–251; that stretch reads TVEELSQIVM…VAKSGLEMFE (71 aa). The interval 254-338 is head domain (RuvB-H); sequence EYGLDLVDRN…FNVKESGDKR (85 aa). 2 residues coordinate DNA: lysine 309 and arginine 314.

It belongs to the RuvB family. Homohexamer. Forms an RuvA(8)-RuvB(12)-Holliday junction (HJ) complex. HJ DNA is sandwiched between 2 RuvA tetramers; dsDNA enters through RuvA and exits via RuvB. An RuvB hexamer assembles on each DNA strand where it exits the tetramer. Each RuvB hexamer is contacted by two RuvA subunits (via domain III) on 2 adjacent RuvB subunits; this complex drives branch migration. In the full resolvosome a probable DNA-RuvA(4)-RuvB(12)-RuvC(2) complex forms which resolves the HJ.

The protein resides in the cytoplasm. It carries out the reaction ATP + H2O = ADP + phosphate + H(+). Functionally, the RuvA-RuvB-RuvC complex processes Holliday junction (HJ) DNA during genetic recombination and DNA repair, while the RuvA-RuvB complex plays an important role in the rescue of blocked DNA replication forks via replication fork reversal (RFR). RuvA specifically binds to HJ cruciform DNA, conferring on it an open structure. The RuvB hexamer acts as an ATP-dependent pump, pulling dsDNA into and through the RuvAB complex. RuvB forms 2 homohexamers on either side of HJ DNA bound by 1 or 2 RuvA tetramers; 4 subunits per hexamer contact DNA at a time. Coordinated motions by a converter formed by DNA-disengaged RuvB subunits stimulates ATP hydrolysis and nucleotide exchange. Immobilization of the converter enables RuvB to convert the ATP-contained energy into a lever motion, pulling 2 nucleotides of DNA out of the RuvA tetramer per ATP hydrolyzed, thus driving DNA branch migration. The RuvB motors rotate together with the DNA substrate, which together with the progressing nucleotide cycle form the mechanistic basis for DNA recombination by continuous HJ branch migration. Branch migration allows RuvC to scan DNA until it finds its consensus sequence, where it cleaves and resolves cruciform DNA. This chain is Holliday junction branch migration complex subunit RuvB, found in Caldicellulosiruptor saccharolyticus (strain ATCC 43494 / DSM 8903 / Tp8T 6331).